A 338-amino-acid chain; its full sequence is Heat-inducible transcription repressor HrcA (338 aa).

The protein belongs to the HrcA family.

Its function is as follows. Negative regulator of class I heat shock genes (grpE-dnaK-dnaJ and groELS operons). Prevents heat-shock induction of these operons. The protein is Heat-inducible transcription repressor HrcA of Streptomyces avermitilis (strain ATCC 31267 / DSM 46492 / JCM 5070 / NBRC 14893 / NCIMB 12804 / NRRL 8165 / MA-4680).